Reading from the N-terminus, the 997-residue chain is MPATSMHQEDKQSANGLNLSPLERIKIEKHYGGGATLAFISNQHDELAQVLSRADILKIASYDCAAQALQAVLDCGPMLGKRGFSRADIVRIAGNGGGAQALYSVLDVEPTLGKRGFSQVDVVKIAGGGAQALHTVLEIGPTLGERGFSRGDIVTIAGNNGGAQALQAVLELEPTLRERGFNQADIVKIAGNGGGAQALQAVLDVEPALGKRGFSRVDIAKIAGGGAQALQAVLGLEPTLRKRGFHPTDIIKIAGNNGGAQALQAVLDLELMLRERGFSQADIVKMASNIGGAQALQAVLNLEPALCERGFSQPDIVKMAGNSGGAQALQAVLDLELAFRERGFSQADIVKMASNIGGAQALQAVLELEPALHERGFSQANIVKMAGNSGGAQALQAVLDLELVFRERGFSQPEIVEMAGNIGGAQALHTVLDLELAFRERGVRQADIVKIVGNNGGAQALQAVFELEPTLRERGFNQATIVKIAANGGGAQALYSVLDVEPTLDKRGFSRVDIVKIAGGGAQALHTAFELEPTLRKRGFNPTDIVKIAGNKGGAQALQAVLELEPALRERGFNQATIVKMAGNAGGAQALYSVLDVEPALRERGFSQPEIVKIAGNIGGAQALHTVLELEPTLHKRGFNPTDIVKIAGNSGGAQALQAVLELEPAFRERGFGQPDIVKMASNIGGAQALQAVLELEPALRERGFSQPDIVEMAGNIGGAQALQAVLELEPAFRERGFSQSDIVKIAGNIGGAQALQAVLELEPTLRESDFRQADIVNIAGNDGSTQALKAVIEHGPRLRQRGFNRASIVKIAGNSGGAQALQAVLKHGPTLDERGFNLTNIVKIAGNGGGAQALKAVIEHGPTLQQRGFNLTDIVEMAGKGGGAQALKAVLEHGPTLRQRGFNLIDIVEMASNTGGAQALKTVLEHGPTLRQRDLSLIDIVEIASNGGAQALKAVLKYGPVLMQAGRSNEEIVHVAARRGGAGRIRKMVALLLERQ.

Residues 19–50 (LSPLERIKIEKHYGGGATLAFISNQHDELAQV) form a Cryptic repeat -1 repeat. A Cryptic repeat 0 repeat occupies 51-83 (LSRADILKIASYDCAAQALQAVLDCGPMLGKRG). 27 Core repeat repeats span residues 84–116 (FSRA…GKRG), 117–147 (FSQV…GERG), 148–180 (FSRG…RERG), 181–213 (FNQA…GKRG), 214–244 (FSRV…RKRG), 245–277 (FHPT…RERG), 278–310 (FSQA…CERG), 311–343 (FSQP…RERG), 344–376 (FSQA…HERG), 377–409 (FSQA…RERG), 410–442 (FSQP…RERG), 443–475 (VRQA…RERG), 476–508 (FNQA…DKRG), 509–539 (FSRV…RKRG), 540–572 (FNPT…RERG), 573–605 (FNQA…RERG), 606–638 (FSQP…HKRG), 639–671 (FNPT…RERG), 672–704 (FGQP…RERG), 705–737 (FSQP…RERG), 738–770 (FSQS…RESD), 771–803 (FRQA…RQRG), 804–836 (FNRA…DERG), 837–869 (FNLT…QQRG), 870–902 (FNLT…RQRG), 903–935 (FNLI…RQRD), and 936–967 (LSLI…MQAG). The interval 84 to 967 (FSRADIVRIA…KYGPVLMQAG (884 aa)) is buD domain. ANK repeat units follow at residues 772 to 801 (RQAD…RLRQ), 805 to 834 (NRAS…TLDE), 838 to 867 (NLTN…TLQQ), and 871 to 900 (NLTD…TLRQ). One copy of the Cryptic repeat +1 repeat lies at 968 to 997 (RSNEEIVHVAARRGGAGRIRKMVALLLERQ).

Belongs to the transcription activator-like effector (TALE) family. Bat subfamily.

Its function is as follows. Binds to DNA in a sequence-specific manner. The chain is Burkholderia TALE-like protein 2 from Mycetohabitans rhizoxinica (strain DSM 19002 / CIP 109453 / HKI 454) (Paraburkholderia rhizoxinica).